The following is a 435-amino-acid chain: D-aminoacyl-tRNA deacylase (435 aa).

It belongs to the DtdA deacylase family. In terms of assembly, monomer. It depends on Zn(2+) as a cofactor.

The catalysed reaction is a D-aminoacyl-tRNA + H2O = a tRNA + a D-alpha-amino acid + H(+). The enzyme catalyses glycyl-tRNA(Ala) + H2O = tRNA(Ala) + glycine + H(+). D-aminoacyl-tRNA deacylase with broad substrate specificity. By recycling D-aminoacyl-tRNA to D-amino acids and free tRNA molecules, this enzyme counteracts the toxicity associated with the formation of D-aminoacyl-tRNA entities in vivo. This is D-aminoacyl-tRNA deacylase from Methanosphaerula palustris (strain ATCC BAA-1556 / DSM 19958 / E1-9c).